The primary structure comprises 66 residues: Large ribosomal subunit protein bL35 (66 aa).

Residues 1–16 (MPKQKTHRASAKRFKR) are compositionally biased toward basic residues. The interval 1-21 (MPKQKTHRASAKRFKRTGSGG) is disordered.

Belongs to the bacterial ribosomal protein bL35 family.

The polypeptide is Large ribosomal subunit protein bL35 (Streptococcus pneumoniae serotype 2 (strain D39 / NCTC 7466)).